Here is a 429-residue protein sequence, read N- to C-terminus: Histidinol dehydrogenase (429 aa).

NAD(+) is bound by residues Y130, Q191, and N214. Substrate is bound by residues S237, Q259, and H262. Zn(2+)-binding residues include Q259 and H262. Residues E327 and H328 each act as proton acceptor in the active site. Positions 328, 361, 415, and 420 each coordinate substrate. D361 contributes to the Zn(2+) binding site. Zn(2+) is bound at residue H420.

This sequence belongs to the histidinol dehydrogenase family. It depends on Zn(2+) as a cofactor.

It catalyses the reaction L-histidinol + 2 NAD(+) + H2O = L-histidine + 2 NADH + 3 H(+). It participates in amino-acid biosynthesis; L-histidine biosynthesis; L-histidine from 5-phospho-alpha-D-ribose 1-diphosphate: step 9/9. In terms of biological role, catalyzes the sequential NAD-dependent oxidations of L-histidinol to L-histidinaldehyde and then to L-histidine. The protein is Histidinol dehydrogenase of Neisseria meningitidis serogroup B (strain ATCC BAA-335 / MC58).